Reading from the N-terminus, the 466-residue chain is Phage-like element PBSX protein XkdK (466 aa).

Belongs to the myoviridae tail sheath protein family.

This Bacillus subtilis (strain 168) protein is Phage-like element PBSX protein XkdK (xkdK).